A 322-amino-acid polypeptide reads, in one-letter code: Quinolinate synthase (322 aa).

Residues His38 and Ser55 each contribute to the iminosuccinate site. Cys100 provides a ligand contact to [4Fe-4S] cluster. Residues 126–128 and Ser143 contribute to the iminosuccinate site; that span reads YIN. Cys186 contributes to the [4Fe-4S] cluster binding site. Iminosuccinate is bound by residues 212–214 and Thr229; that span reads HPE. Cys279 serves as a coordination point for [4Fe-4S] cluster.

This sequence belongs to the quinolinate synthase family. Type 2 subfamily. [4Fe-4S] cluster is required as a cofactor.

It localises to the cytoplasm. The enzyme catalyses iminosuccinate + dihydroxyacetone phosphate = quinolinate + phosphate + 2 H2O + H(+). Its pathway is cofactor biosynthesis; NAD(+) biosynthesis; quinolinate from iminoaspartate: step 1/1. Functionally, catalyzes the condensation of iminoaspartate with dihydroxyacetone phosphate to form quinolinate. In Cyanothece sp. (strain PCC 7425 / ATCC 29141), this protein is Quinolinate synthase.